Reading from the N-terminus, the 305-residue chain is Thyroxine 5-deiodinase (305 aa).

The Cytoplasmic segment spans residues methionine 1–threonine 43. A helical; Signal-anchor for type II membrane protein transmembrane segment spans residues alanine 44–leucine 63. At aspartate 64–valine 305 the chain is on the extracellular side. The disordered stretch occupies residues glycine 79–aspartate 98. The span at glutamate 82–proline 96 shows a compositional bias: acidic residues. Selenocysteine 171 is an active-site residue. A non-standard amino acid (selenocysteine) is located at residue selenocysteine 171.

The protein belongs to the iodothyronine deiodinase family. Monomer. Homodimer. May undergo minor heretodimerization with DIO1 and DIO2. As to expression, expressed in brain only.

It localises to the cell membrane. The protein resides in the endosome membrane. The catalysed reaction is 3,3',5'-triiodo-L-thyronine + iodide + A + H(+) = L-thyroxine + AH2. The enzyme catalyses 3,3'-diiodo-L-thyronine + iodide + A + H(+) = 3,3',5-triiodo-L-thyronine + AH2. It carries out the reaction 3-iodo-L-thyronine + iodide + A + H(+) = 3,5-diiodo-L-thyronine + AH2. It catalyses the reaction L-thyronine + iodide + A + H(+) = 3-iodo-L-thyronine + AH2. The catalysed reaction is 3',5'-diiodo-L-thyronine + iodide + A + H(+) = 3,3',5'-triiodo-L-thyronine + AH2. The enzyme catalyses 3'-iodo-L-thyronine + iodide + A + H(+) = 3,3'-diiodo-L-thyronine + AH2. It carries out the reaction 3,3',5'-triiodothyronamine + iodide + A + H(+) = 3,3',5,5'-tetraiodothyronamine + AH2. It catalyses the reaction 3',5'-diiodothyronamine + iodide + A + H(+) = 3,3',5'-triiodothyronamine + AH2. The catalysed reaction is 3,3'-diiodothyronamine + iodide + A + H(+) = 3,3',5-triiodothyronamine + AH2. The enzyme catalyses 3-iodothyronamine + iodide + A + H(+) = 3,5-diiodothyronamine + AH2. It carries out the reaction 3'-iodothyronamine + iodide + A + H(+) = 3,3'-diiodothyronamine + AH2. It catalyses the reaction thyronamine + iodide + A + H(+) = 3-iodothyronamine + AH2. Functionally, plays a crucial role in the metabolism of thyroid hormones (TH) and has specific roles in TH activation and inactivation by deiodination, particularly in different tissues. Catalyzes the deiodination of L-thyroxine (T4) to 3,3',5'-triiodothyronine (rT3), 3,5-diiodothyronine (3,5-T2) to 3-monoiodothyronine (3-T1), rT3 to 3',5'-diiodothyronine (3',5'-T2) and 3,3'-diiodothyronine (3,3'-T2) to 3'-monoiodothyronine (3'-T1) via inner-ring deiodination (IRD). Catalyzes the deiodination of 3,5,3'-triiodothyronine (T3) to 3,3'-diiodothyronine (3,3'-T2) via IRD. Catalyzes the deiodination of 3-T1 to L-thyronine (T0) via outer-ring deiodination (ORD). Catalyzes the tyrosyl ring deiodinations of 3,3',5,5'-tetraiodothyronamine, 3,3',5'-triiodothyronamine, 3,5,3'-triiodothyronamine, 3,5-diiodothyronamine, 3,3'-diiodothyronamine and 3-iodothyronamine. In Sus scrofa (Pig), this protein is Thyroxine 5-deiodinase (DIO3).